A 138-amino-acid polypeptide reads, in one-letter code: Protein FAM136A (138 aa).

Ala2 bears the N-acetylalanine mark. A phosphothreonine mark is found at Thr124 and Thr126.

This sequence belongs to the FAM136 family.

The polypeptide is Protein FAM136A (FAM136A) (Homo sapiens (Human)).